The chain runs to 98 residues: MTLTKVELADNLIEKHGLNKSEAKALVEDFFEEIRVALEKGNDVKLSGFGNFELREKASRPGRNPKTGESVPVSARRVVVFKPGQKLRARVEKTKPKS.

This sequence belongs to the bacterial histone-like protein family. As to quaternary structure, heterodimer of an alpha and a beta chain.

Functionally, this protein is one of the two subunits of integration host factor, a specific DNA-binding protein that functions in genetic recombination as well as in transcriptional and translational control. In Mannheimia succiniciproducens (strain KCTC 0769BP / MBEL55E), this protein is Integration host factor subunit alpha.